Here is a 546-residue protein sequence, read N- to C-terminus: Protein FAM124A (546 aa).

Disordered regions lie at residues 1–37, 286–360, and 488–546; these read MDPK…SELS, FPKP…FQRS, and SSSS…EFYI. The segment covering 24–36 has biased composition (low complexity); the sequence is SDYSHLSSTSSEL. Residues 286-302 show a composition bias toward basic residues; that stretch reads FPKPGRVHHASEKKRHS. Polar residues-rich tracts occupy residues 304–324 and 347–360; these read PLPS…SPLN and ANST…FQRS. Residues 488-511 are compositionally biased toward low complexity; the sequence is SSSSATARAAPPAPSTSTLTDSSP.

The protein belongs to the FAM124 family.

In Homo sapiens (Human), this protein is Protein FAM124A (FAM124A).